A 125-amino-acid chain; its full sequence is Small ribosomal subunit protein uS12 (125 aa).

D89 bears the 3-methylthioaspartic acid mark.

It belongs to the universal ribosomal protein uS12 family. Part of the 30S ribosomal subunit. Contacts proteins S8 and S17. May interact with IF1 in the 30S initiation complex.

In terms of biological role, with S4 and S5 plays an important role in translational accuracy. Interacts with and stabilizes bases of the 16S rRNA that are involved in tRNA selection in the A site and with the mRNA backbone. Located at the interface of the 30S and 50S subunits, it traverses the body of the 30S subunit contacting proteins on the other side and probably holding the rRNA structure together. The combined cluster of proteins S8, S12 and S17 appears to hold together the shoulder and platform of the 30S subunit. The sequence is that of Small ribosomal subunit protein uS12 from Clostridium botulinum (strain ATCC 19397 / Type A).